We begin with the raw amino-acid sequence, 391 residues long: Eukaryotic initiation factor 4A-3 (391 aa).

The Q motif motif lies at 18–46 (ASFAEMGIKDDLLRGVYQYGFEKPSAIQQ). The Helicase ATP-binding domain maps to 49–219 (VLPIISGRDV…SKFMTDPVRI (171 aa)). Position 62 to 69 (62 to 69 (AQSGTGKT)) interacts with ATP. The DEAD box motif lies at 167–170 (DESD). Residues 230–391 (GIKQFFVAVE…EMPMNVADLI (162 aa)) enclose the Helicase C-terminal domain.

Belongs to the DEAD box helicase family. eIF4A subfamily. EIF4F is a multi-subunit complex, the composition of which varies with external and internal environmental conditions. It is composed of at least EIF4A, EIF4E and EIF4G.

The enzyme catalyses ATP + H2O = ADP + phosphate + H(+). Functionally, ATP-dependent RNA helicase which is a subunit of the eIF4F complex involved in cap recognition and is required for mRNA binding to ribosome. In the current model of translation initiation, eIF4A unwinds RNA secondary structures in the 5'-UTR of mRNAs which is necessary to allow efficient binding of the small ribosomal subunit, and subsequent scanning for the initiator codon. The chain is Eukaryotic initiation factor 4A-3 from Nicotiana plumbaginifolia (Leadwort-leaved tobacco).